A 227-amino-acid chain; its full sequence is dTTP/UTP pyrophosphatase (227 aa).

Aspartate 98 functions as the Proton acceptor in the catalytic mechanism.

It belongs to the Maf family. YhdE subfamily. A divalent metal cation is required as a cofactor.

Its subcellular location is the cytoplasm. It catalyses the reaction dTTP + H2O = dTMP + diphosphate + H(+). It carries out the reaction UTP + H2O = UMP + diphosphate + H(+). Nucleoside triphosphate pyrophosphatase that hydrolyzes dTTP and UTP. May have a dual role in cell division arrest and in preventing the incorporation of modified nucleotides into cellular nucleic acids. In Bartonella quintana (strain Toulouse) (Rochalimaea quintana), this protein is dTTP/UTP pyrophosphatase.